A 431-amino-acid polypeptide reads, in one-letter code: Trigger factor (431 aa).

The PPIase FKBP-type domain maps to 164-249 (GDIAVIDFKG…IKEIKRKELP (86 aa)).

Belongs to the FKBP-type PPIase family. Tig subfamily.

Its subcellular location is the cytoplasm. The enzyme catalyses [protein]-peptidylproline (omega=180) = [protein]-peptidylproline (omega=0). Functionally, involved in protein export. Acts as a chaperone by maintaining the newly synthesized protein in an open conformation. Functions as a peptidyl-prolyl cis-trans isomerase. In Clostridium acetobutylicum (strain ATCC 824 / DSM 792 / JCM 1419 / IAM 19013 / LMG 5710 / NBRC 13948 / NRRL B-527 / VKM B-1787 / 2291 / W), this protein is Trigger factor.